The sequence spans 395 residues: Succinyl-diaminopimelate desuccinylase (395 aa).

Histidine 74 provides a ligand contact to Zn(2+). Aspartate 76 is a catalytic residue. A Zn(2+)-binding site is contributed by aspartate 107. The active-site Proton acceptor is glutamate 141. Residues glutamate 142, glutamate 170, and histidine 368 each contribute to the Zn(2+) site.

Belongs to the peptidase M20A family. DapE subfamily. Homodimer. Zn(2+) serves as cofactor. The cofactor is Co(2+).

It carries out the reaction N-succinyl-(2S,6S)-2,6-diaminopimelate + H2O = (2S,6S)-2,6-diaminopimelate + succinate. It functions in the pathway amino-acid biosynthesis; L-lysine biosynthesis via DAP pathway; LL-2,6-diaminopimelate from (S)-tetrahydrodipicolinate (succinylase route): step 3/3. Its function is as follows. Catalyzes the hydrolysis of N-succinyl-L,L-diaminopimelic acid (SDAP), forming succinate and LL-2,6-diaminopimelate (DAP), an intermediate involved in the bacterial biosynthesis of lysine and meso-diaminopimelic acid, an essential component of bacterial cell walls. The protein is Succinyl-diaminopimelate desuccinylase of Brucella abortus (strain S19).